The following is a 579-amino-acid chain: Membrane frizzled-related protein (579 aa).

Residues 1 to 69 (MKDFSDVILC…RPDCRFSWLC (69 aa)) are Cytoplasmic-facing. Residues 70-90 (VLLLSSLLLLLLGLLVAIILA) traverse the membrane as a helical; Signal-anchor for type II membrane protein segment. The Extracellular segment spans residues 91–579 (QLQAAPPSGA…AADLEACAQP (489 aa)). Residues 100-143 (ASHSPLPAGGLTTTTTTPTITTSQAAGTPKGQQESGVSPSPQST) are disordered. The span at 111 to 121 (TTTTTTPTITT) shows a compositional bias: low complexity. A compositionally biased stretch (polar residues) spans 122 to 143 (SQAAGTPKGQQESGVSPSPQST). 2 disulfide bridges follow: Cys144–Cys170 and Cys197–Cys216. One can recognise a CUB 1 domain in the interval 144 to 253 (CGGLLSGPRG…FGFHAWYQAM (110 aa)). A glycan (N-linked (GlcNAc...) asparagine) is linked at Asn227. The region spanning 259-295 (SCAHDEFRCDQLICLLPDSVCDGFANCADGSDETNCS) is the LDL-receptor class A 1 domain. 5 disulfide bridges follow: Cys260-Cys272, Cys267-Cys285, Cys279-Cys294, Cys301-Cys327, and Cys354-Cys377. One can recognise a CUB 2 domain in the interval 301–414 (CGGNLTGLQG…GGFSATYLAF (114 aa)). Asn415 is a glycosylation site (N-linked (GlcNAc...) asparagine). Positions 420 to 455 (PCGPSELSCQAGGCKGVQWMCDMWRDCTDGSDDNCS) constitute an LDL-receptor class A 2 domain. 8 disulfides stabilise this stretch: Cys421–Cys433, Cys428–Cys446, Cys440–Cys454, Cys466–Cys528, Cys474–Cys521, Cys512–Cys549, Cys538–Cys576, and Cys542–Cys564. Residues 461 to 579 (PPELACEPVQ…AADLEACAQP (119 aa)) form the FZ domain.

As to quaternary structure, interacts with C1QTNF5. Specifically expressed in brain. Strongly expressed in medulla oblongata and to a lower extent in hippocampus and corpus callosum. Expressed in keratinocytes.

It localises to the apical cell membrane. Functionally, may play a role in eye development. This is Membrane frizzled-related protein (MFRP) from Homo sapiens (Human).